Consider the following 103-residue polypeptide: V-type ATP synthase subunit F (103 aa).

Belongs to the V-ATPase F subunit family.

In terms of biological role, produces ATP from ADP in the presence of a proton gradient across the membrane. This chain is V-type ATP synthase subunit F, found in Clostridium botulinum (strain Alaska E43 / Type E3).